The sequence spans 1025 residues: Protein HIRA (1025 aa).

WD repeat units lie at residues 11-53 (HNGK…KEED), 68-107 (NHLA…GPST), 129-168 (NHTG…EMVT), 172-211 (GHTG…MEAN), 220-263 (GGTT…TNMD), 266-322 (GHRK…PLVV), and 326-367 (LFDK…DPLS). Disordered stretches follow at residues 408-433 (ERRN…KLNS), 490-534 (GSSM…AAKV), 563-614 (RFTE…EDKM), and 634-678 (GAEV…AAGA). Composition is skewed to polar residues over residues 412 to 433 (STQA…KLNS) and 490 to 508 (GSSM…SSPG). Basic and acidic residues predominate over residues 588 to 614 (ERPKESTPMQKDVKSKEDTSSDSEDKM).

Belongs to the WD repeat HIR1 family.

The protein localises to the nucleus. Its function is as follows. Required for replication-independent chromatin assembly and for the periodic repression of histone gene transcription during the cell cycle. The polypeptide is Protein HIRA (hira) (Takifugu rubripes (Japanese pufferfish)).